Reading from the N-terminus, the 86-residue chain is Apolipoprotein C-I (86 aa).

The signal sequence occupies residues Met-1–Gly-26.

It belongs to the apolipoprotein C1 family.

It localises to the secreted. Inhibitor of lipoprotein binding to the low density lipoprotein (LDL) receptor, LDL receptor-related protein, and very low density lipoprotein (VLDL) receptor. Associates with high density lipoproteins (HDL) and the triacylglycerol-rich lipoproteins in the plasma and makes up about 10% of the protein of the VLDL and 2% of that of HDL. Appears to interfere directly with fatty acid uptake and is also the major plasma inhibitor of cholesteryl ester transfer protein (CETP). Binds free fatty acids and reduces their intracellular esterification. Modulates the interaction of APOE with beta-migrating VLDL and inhibits binding of beta-VLDL to the LDL receptor-related protein. The chain is Apolipoprotein C-I (APOC1) from Aotus nancymaae (Ma's night monkey).